Reading from the N-terminus, the 217-residue chain is MANLPILLDYWPSMFGMRARVALREKGVEFEYREEDFSNKSPLLLQSNPIHKKIPVLVHNGKPVCESLNVVQYVDEAWPEKNPFFPSDPYGRAQARFWADFVDKKFTDAQFKVWGKKGEEQEAGKKEFIEAVKILESELGDKPYFGGDSFGYVDISLITFSSWFQAYEKFGNFSIESESPKLIAWAKRCMEKESVSKSLPDSEKIVAYAAEYRKNNL.

The GST N-terminal domain occupies Asn3–Asn82. Glutathione-binding residues include Ser13, Ile54, and Ser67. The GST C-terminal domain occupies Asp88 to Tyr208.

Belongs to the GST superfamily. Tau family. Homodimerization. Interacts with JAR1/FIN219 under continuous far red (cFR) light to stimulate JAR1/FIN219 activity and substrate selectivity. Mostly associated with vascular tissues, especially near hydathodes.

Its subcellular location is the nucleus. The protein resides in the cytoplasm. It is found in the cytosol. It carries out the reaction RX + glutathione = an S-substituted glutathione + a halide anion + H(+). With respect to regulation, activated by JAR1/FIN219. Exhibits glutathione-dependent thiol transferase activities. Can use glutathione (GSH) and 1-chloro-2,4-dinitrobenzene (CDNB) as substrates. Involved in the regulation of far-red light influence on development. Regulator of the interplay between light and JA signaling by increasing JAR1/FIN219 efficiency. Maybe involved in gravitropic signal transduction. This Arabidopsis thaliana (Mouse-ear cress) protein is Glutathione S-transferase U20.